Here is a 1679-residue protein sequence, read N- to C-terminus: MEDKISEFLNVPFESLQGVTYPVLRKLYKKIAKFERSEEEVTKLNVLVDEIKSQYYSRISKLKQLLDESSEQKNTAKEELNGLKDQLNEERSRYRREIDALKKQLHVSHEAMREVNDEKRVKEEYDIWQSRDQGNDSLNDDLNKENKLLRRKLMEMENILQRCKSNAISLQLKYDTSVQEKELMLQSKKLIEEKLSSFSKKTLTEEVTKSSHVENLEEKLYQMQSNYESVFTYNKFLLNQNKQLSQSVEEKVLEMKNLKDTASVEKAEFSKEMTLQKNMNDLLRSQLTSLEKDCSLRAIEKNDDNSCRNPEHTDVIDELIDTKLRLEKSKNECQRLQNIVMDCTKEEEATMTTSAVSPTVGKLFSDIKVLKRQLIKERNQKFQLQNQLEDFILELEHKTPELISFKERTKSLEHELKRSTELLETVSLTKRKQEREITSLRQKINGCEANIHSLVKQRLDLARQVKLLLLNTSAIQETASPLSQDELISLRKILESSNIVNENDSQAIITERLVEFSNVNELQEKNVELLNCIRILADKLENYEGKQDKTLQKVENQTIKEAKDAIIELENINAKMETRINILLRERDSYKLLASTEENKANTNSVTSMEAAREKKIRELEAELSSTKVENSAIIQNLRKELLIYKKSQCKKKTTLEDFENFKGLAKEKERMLEEAIDHLKAELEKQKSWVPSYIHVEKERASTELSQSRIKIKSLEYEISKLKKETASFIPTKESLTRDFEQCCKEKKELQMRLKESEISHNENKMDFSSKEGQYKAKIKELENNLERLRSDLQSKIQEIESIRSCKDSQLKWAQNTIDDTEMKMKSLLTELSNKETTIEKLSSEIENLDKELRKTKFQYKFLDQNSDASTLEPTLRKELEQIQVQLKDANSQIQAYEEIISSNENALIELKNELAKTKENYDAKIELEKKEKWAREEDLSRLRGELGEIRALQPKLKEGALHFVQQSEKLRNEVERIQKMIEKIEKMSTIVQLCKKKEMSQYQSTMKENKDLSELVIRLEKDAADCQAELTKTKSSLYSAQDLLDKHERKWMEEKADYERELISNIEQTESLRVENSVLIEKVDDTAANNGDKDHLKLVSLFSNLRHERNSLETKLTTCKRELAFVKQKNDSLEKTINDLQRTQTLSEKEYQCSAVIIDEFKDITKEVTQVNILKENNAILQKSLKNVTEKNREIYKQLNDRQEEISRLQRDLIQTKEQVSINSNKILVYESEMEQCKQRYQDLSQQQKDAQKKDIEKLTNEISDLKGKLSSAENANADLENKFNRLKKQAHEKLDASKKQQAALTNELNELKAIKDKLEQDLHFENAKVIDLDTKLKAHELQSEDVSRDHEKDTYRTLMEEIESLKKELQIFKTANSSSDAFEKLKVNMEKEKDRIIDERTKEFEKKLQETLNKSTSSEAEYSKDIETLKKEWLKEYEDETLRRIKEAEENLKKRIRLPSEERIQKIISKRKEELEEEFRKKLKENAGSLTFLDNKGSGEDAEEELWNSPSKGNSERPSAVAGFINQKNLKPQEQLKNVKNDVSFNDSQSMVTNKENNIVDSSAAGNKAIPTFSFGKPFFSSNTSSLQSFQNPFTASQSNINTNAPLRTLNIQPEVAVKAAINFSNVTDLTNNSTDGAKITEIGSTSKRPIESGTSSDPDTKKVKESPANDQASNE.

Coiled-coil stretches lie at residues 32–176 (AKFE…KYDT), 233–466 (YNKF…RQVK), 516–1064 (FSNV…EREL), and 1099–1491 (KLVS…ENAG). 3 consecutive short sequence motifs (bipartite nuclear localization signal) follow at residues 417–433 (KRST…KRKQ), 639–655 (RKEL…KKTT), and 1433–1449 (KKEW…RRIK). Disordered stretches follow at residues 1495–1521 (FLDN…SERP) and 1632–1679 (DLTN…ASNE). Polar residues-rich tracts occupy residues 1511-1520 (NSPSKGNSER) and 1646-1661 (IGST…TSSD). Position 1512 is a phosphoserine (Ser-1512). Basic and acidic residues predominate over residues 1662–1671 (PDTKKVKESP). Residue Ser-1670 is modified to Phosphoserine.

As to quaternary structure, component of the nuclear complex (NPC). NPC constitutes the exclusive means of nucleocytoplasmic transport. NPCs allow the passive diffusion of ions and small molecules and the active, nuclear transport receptor-mediated bidirectional transport of macromolecules such as proteins, RNAs, ribonucleoparticles (RNPs), and ribosomal subunits across the nuclear envelope. Due to its 8-fold rotational symmetry, all subunits are present with 8 copies or multiples thereof. Interacts with NUP60 and NIC96, which tether it to the nuclear pore complex. Component of the spindle pole body core in which it interacts directly with SPC110, SPC42 and SPC29. Also interacts with YKU70 (HDF1) and MLP1.

The protein localises to the nucleus. It is found in the cytoplasm. Its subcellular location is the cytoskeleton. It localises to the microtubule organizing center. The protein resides in the spindle pole body. The protein localises to the nuclear pore complex. Its function is as follows. Together with the closely related MLP1, involved in the structural and functional organization of perinuclear chromatin. MLP1/MLP2 associate with the nuclear pore complex and form filamentous structures along the nuclear periphery. Has a role in the localization of Esc1 to nucleolar regions. Together with MLP1, mediates tethering of the some telomeres to the nuclear periphery, probably mediated by YKU70/YKU80 (HDF1/HDF2) heterodimer and show perinuclear location dependent silencing. MLP1 and MLP2 are involved in telomere length regulation but not silencing or telomere anchoring. Plays a role in the incorporation of components into the spindle pole body. Involved in double-strand break repair, probably also mediated by the YKU70/YKU80 (HDF1/HDF2) heterodimer. The protein is Protein MLP2 (MLP2) of Saccharomyces cerevisiae (strain ATCC 204508 / S288c) (Baker's yeast).